A 146-amino-acid polypeptide reads, in one-letter code: Hemoglobin subunit beta (146 aa).

N-acetylvaline is present on V1. The Globin domain occupies 2–146 (HLTDAEKAAV…VATALAHKYH (145 aa)). At S44 the chain carries Phosphoserine. Residue K59 is modified to N6-acetyllysine. Residue H63 participates in heme b binding. N6-acetyllysine is present on K82. Heme b is bound at residue H92. Position 93 is an S-nitrosocysteine (C93). Residue K144 is modified to N6-acetyllysine.

The protein belongs to the globin family. In terms of assembly, heterotetramer of two alpha chains and two beta chains. Red blood cells.

Functionally, involved in oxygen transport from the lung to the various peripheral tissues. The sequence is that of Hemoglobin subunit beta (HBB) from Spalax ehrenbergi (Middle East blind mole rat).